A 206-amino-acid polypeptide reads, in one-letter code: Large ribosomal subunit protein mL40 (206 aa).

The N-terminal 46 residues, 1 to 46, are a transit peptide targeting the mitochondrion; that stretch reads MTASVLRSISLALRPTSGLLGTWQTQLRETHQRASLLSFWELIPMR. The interval 168–192 is disordered; it reads LFPFEKEGPHYTPPIPNYQPPEGRY.

This sequence belongs to the mitochondrion-specific ribosomal protein mL40 family. In terms of assembly, component of the mitochondrial large ribosomal subunit (mt-LSU). Mature mammalian 55S mitochondrial ribosomes consist of a small (28S) and a large (39S) subunit. The 28S small subunit contains a 12S ribosomal RNA (12S mt-rRNA) and 30 different proteins. The 39S large subunit contains a 16S rRNA (16S mt-rRNA), a copy of mitochondrial valine transfer RNA (mt-tRNA(Val)), which plays an integral structural role, and 52 different proteins. mL40 binds to the major groove of the anticodon stem of mt-tRNA(Val) in the central protuberance. As to expression, ubiquitous.

The protein localises to the mitochondrion. This chain is Large ribosomal subunit protein mL40 (MRPL40), found in Homo sapiens (Human).